Here is a 424-residue protein sequence, read N- to C-terminus: Alkaline nuclease (424 aa).

It belongs to the baculo-herpesviridae alkaline nuclease family. As to quaternary structure, interacts with LEF-3.

Its subcellular location is the host nucleus. Functionally, may play a role in maturation and encapsidation of viral replicated genome, by promoting DNA homologous recombination. Exhibits endonuclease and 5'-&gt;3' exonuclease activities. The endonuclease activity displays a specificity for ssDNA in vitro. The chain is Alkaline nuclease (ALK-EXO) from Orgyia pseudotsugata (Douglas-fir tussock moth).